The following is a 231-amino-acid chain: DNA mismatch repair protein MutH (231 aa).

The protein belongs to the MutH family.

Its subcellular location is the cytoplasm. Its function is as follows. Sequence-specific endonuclease that cleaves unmethylated GATC sequences. It is involved in DNA mismatch repair. In Salmonella enteritidis PT4 (strain P125109), this protein is DNA mismatch repair protein MutH.